Here is a 274-residue protein sequence, read N- to C-terminus: Large ribosomal subunit protein uL2 (274 aa).

Positions 195 to 274 are disordered; the sequence is VGNSDHGLES…SKYIIERRKK (80 aa). 2 stretches are compositionally biased toward basic residues: residues 209–220 and 244–264; these read GRSRWQGRRPRN and PRSRKGLYAKGLKTRAPKKQS.

This sequence belongs to the universal ribosomal protein uL2 family. In terms of assembly, part of the 50S ribosomal subunit. Forms a bridge to the 30S subunit in the 70S ribosome.

Its function is as follows. One of the primary rRNA binding proteins. Required for association of the 30S and 50S subunits to form the 70S ribosome, for tRNA binding and peptide bond formation. It has been suggested to have peptidyltransferase activity; this is somewhat controversial. Makes several contacts with the 16S rRNA in the 70S ribosome. In Bacteroides fragilis (strain ATCC 25285 / DSM 2151 / CCUG 4856 / JCM 11019 / LMG 10263 / NCTC 9343 / Onslow / VPI 2553 / EN-2), this protein is Large ribosomal subunit protein uL2.